Reading from the N-terminus, the 357-residue chain is Decorin (357 aa).

The first 16 residues, 1 to 16 (MRLVLLFVLLLPVCLA), serve as a signal peptide directing secretion. Positions 17–30 (TRFHQKGLFDFMIE) are excised as a propeptide. O-linked (Xyl...) (glycosaminoglycan) serine glycosylation is present at S46. Cystine bridges form between C52–C58 and C56–C65. 12 LRR repeats span residues 71-91 (ERVP…NNKI), 92-115 (TEIK…NNKI), 116-139 (SKIS…KNNL), 140-160 (KELP…ENEI), 161-184 (SKLR…TNPL), 185-210 (KSSG…DTNI), 211-231 (TSIP…GNKI), 232-255 (SKID…FNSI), 256-279 (SSVE…NNEL), 280-302 (VRVP…NNKI), 303-332 (ASIG…SNPV), and 333-357 (QYWE…GNYK). A glycan (N-linked (GlcNAc...) asparagine) is linked at N209. N260 is a glycosylation site (N-linked (GlcNAc...) asparagine). C311 and C344 are disulfide-bonded.

The protein belongs to the small leucine-rich proteoglycan (SLRP) family. SLRP class I subfamily. Binds to type I and type II collagen, to fibronectin and TGF-beta. Forms a ternary complex with MFAP2 and ELN. The attached glycosaminoglycan chain can be either chondroitin sulfate or dermatan sulfate depending upon the tissue of origin.

Its subcellular location is the secreted. It localises to the extracellular space. The protein resides in the extracellular matrix. May affect the rate of fibrils formation. The protein is Decorin (DCN) of Gallus gallus (Chicken).